The following is a 196-amino-acid chain: Gastrula zinc finger protein xLCGF3.1 (196 aa).

7 consecutive C2H2-type zinc fingers follow at residues 6-28 (FMCT…HMTH), 34-56 (FTCT…QTIH), 62-84 (FTCI…YMTH), 90-112 (FTCT…QTMH), 118-140 (LTCT…QRVH), 146-168 (FTCT…QTVH), and 174-196 (FTCT…QIVH).

The protein belongs to the krueppel C2H2-type zinc-finger protein family.

The protein resides in the nucleus. May be involved in transcriptional regulation. The polypeptide is Gastrula zinc finger protein xLCGF3.1 (Xenopus laevis (African clawed frog)).